The chain runs to 147 residues: Ribosomal RNA large subunit methyltransferase H (147 aa).

S-adenosyl-L-methionine-binding positions include Leu64, Gly96, and Phe115 to Phe120.

It belongs to the RNA methyltransferase RlmH family. In terms of assembly, homodimer.

The protein localises to the cytoplasm. The catalysed reaction is pseudouridine(1915) in 23S rRNA + S-adenosyl-L-methionine = N(3)-methylpseudouridine(1915) in 23S rRNA + S-adenosyl-L-homocysteine + H(+). Functionally, specifically methylates the pseudouridine at position 1915 (m3Psi1915) in 23S rRNA. This Acholeplasma laidlawii (strain PG-8A) protein is Ribosomal RNA large subunit methyltransferase H.